Here is a 776-residue protein sequence, read N- to C-terminus: E3 ubiquitin-protein ligase UHRF1 (776 aa).

One can recognise a Ubiquitin-like domain in the interval 1–78 (MWIQVRTMDG…VQLLVRQAVA (78 aa)). The interval 88–126 (AELSDSDSGCGSAQSESDKGSTHGESDVQSAGASGQTDT) is disordered. Residues 93–102 (SDSGCGSAQS) are compositionally biased toward polar residues. A compositionally biased stretch (basic and acidic residues) spans 103–113 (ESDKGSTHGES). The span at 114-126 (DVQSAGASGQTDT) shows a compositional bias: polar residues. Tudor-like stretches follow at residues 135–201 (GFYK…PRAR) and 208–277 (QLEP…IEEP). The tract at residues 278 to 298 (GSAEGPGASSDSPLKKGSNGP) is disordered. Residues 290-299 (PLKKGSNGPE) are linker. The PHD-type zinc finger occupies 297–364 (GPECKVCKDD…DWYCPDCRND (68 aa)). Histone H3R2me0 binding regions lie at residues 331–335 (CDECD) and 351–353 (PDD). A YDG domain is found at 417–580 (GPVPGVPVGT…FLVWRYLLKR (164 aa)). The required to promote base flipping stretch occupies residues 443-444 (HV). DNA contacts are provided by residues 461-462 (AG) and Asp-467. Required for formation of a 5-methylcytosine-binding pocket stretches follow at residues 464–467 (YEDD) and 476–479 (YTGS). Residues 617-660 (EKEKENKNEDDIEETPTKGKRKRKSQSMEEKSSPTKGTPKKMKV) form a disordered region. A Phosphoserine; by CDK2 modification is found at Ser-649. The segment at 706–745 (CICCQEVVYQPITTECQHNVCRECLQRSFKAKVYTCPACR) adopts an RING-type zinc-finger fold.

In terms of processing, phosphorylation at Ser-649 is required for gastrulation. As to expression, expressed in proliferating tissues. Highly expressed 24-48 hours after fertilization (hpf) in rapidly proliferating tissues, including the tectum, retina and brachial arches. Preferentially expressed in the liver bud and expression is maintained in the fully developed liver. Also expressed in the proximal gut. In adult, the highest expression is detected in testis.

Its subcellular location is the nucleus. The protein localises to the cytoplasm. It catalyses the reaction S-ubiquitinyl-[E2 ubiquitin-conjugating enzyme]-L-cysteine + [acceptor protein]-L-lysine = [E2 ubiquitin-conjugating enzyme]-L-cysteine + N(6)-ubiquitinyl-[acceptor protein]-L-lysine.. Its pathway is protein modification; protein ubiquitination. Functionally, multidomain protein that acts as a key epigenetic regulator by bridging DNA methylation and chromatin modification. Specifically recognizes and binds hemimethylated DNA at replication forks via its YDG domain and recruits dnmt1 methyltransferase to ensure faithful propagation of the DNA methylation patterns through DNA replication. In addition to its role in maintenance of DNA methylation, also plays a key role in chromatin modification: through its tudor-like regions and PHD-type zinc fingers, specifically recognizes and binds histone H3 trimethylated at 'Lys-9' (H3K9me3) and unmethylated at 'Arg-2' (H3R2me0), respectively, and recruits chromatin proteins. Enriched in pericentric heterochromatin where it recruits different chromatin modifiers required for this chromatin replication. Also localizes to euchromatic regions where it negatively regulates transcription possibly by impacting DNA methylation and histone modifications. Has E3 ubiquitin-protein ligase activity by mediating the ubiquitination of target proteins. However, it is still unclear how E3 ubiquitin-protein ligase activity is related to its role in chromatin in vivo. Required for pregastrula and lens development. The chain is E3 ubiquitin-protein ligase UHRF1 (uhrf1) from Danio rerio (Zebrafish).